The chain runs to 382 residues: Lipid-A-disaccharide synthase (382 aa).

It belongs to the LpxB family.

The enzyme catalyses 2-N,3-O-bis[(3R)-3-hydroxytetradecanoyl]-alpha-D-glucosaminyl 1-phosphate + UDP-2-N,3-O-bis[(3R)-3-hydroxytetradecanoyl]-alpha-D-glucosamine = lipid A disaccharide (E. coli) + UDP + H(+). It carries out the reaction a lipid X + a UDP-2-N,3-O-bis[(3R)-3-hydroxyacyl]-alpha-D-glucosamine = a lipid A disaccharide + UDP + H(+). It functions in the pathway glycolipid biosynthesis; lipid IV(A) biosynthesis; lipid IV(A) from (3R)-3-hydroxytetradecanoyl-[acyl-carrier-protein] and UDP-N-acetyl-alpha-D-glucosamine: step 5/6. In terms of biological role, condensation of UDP-2,3-diacylglucosamine and 2,3-diacylglucosamine-1-phosphate to form lipid A disaccharide, a precursor of lipid A, a phosphorylated glycolipid that anchors the lipopolysaccharide to the outer membrane of the cell. The sequence is that of Lipid-A-disaccharide synthase from Salmonella arizonae (strain ATCC BAA-731 / CDC346-86 / RSK2980).